Here is a 263-residue protein sequence, read N- to C-terminus: 5'-nucleotidase SurE (263 aa).

D8, D9, S40, and N93 together coordinate a divalent metal cation.

The protein belongs to the SurE nucleotidase family. A divalent metal cation serves as cofactor.

Its subcellular location is the cytoplasm. The catalysed reaction is a ribonucleoside 5'-phosphate + H2O = a ribonucleoside + phosphate. In terms of biological role, nucleotidase that shows phosphatase activity on nucleoside 5'-monophosphates. The protein is 5'-nucleotidase SurE of Caulobacter vibrioides (strain ATCC 19089 / CIP 103742 / CB 15) (Caulobacter crescentus).